The primary structure comprises 239 residues: Tumor protein p53-inducible nuclear protein 1 (239 aa).

The short motif at 25 to 37 (EKEDDEWILVDFI) is the LIR element.

Interacts with p53/TP53 and HIPK2. Interacts with PRKCG, GABARAP, GABARAPL1, GABARAPL2, MAP1LC3A, MAP1LC3B and MAP1LC3C. Specifically expressed by acinar cells of chronic pancreatitis tissue.

Its subcellular location is the cytoplasm. It localises to the cytosol. It is found in the nucleus. The protein resides in the PML body. The protein localises to the cytoplasmic vesicle. Its subcellular location is the autophagosome. Its function is as follows. Antiproliferative and proapoptotic protein involved in cell stress response which acts as a dual regulator of transcription and autophagy. Acts as a positive regulator of autophagy. In response to cellular stress or activation of autophagy, relocates to autophagosomes where it interacts with autophagosome-associated proteins GABARAP, GABARAPL1/L2, MAP1LC3A/B/C and regulates autophagy. Acts as an antioxidant and plays a major role in p53/TP53-driven oxidative stress response. Possesses both a p53/TP53-independent intracellular reactive oxygen species (ROS) regulatory function and a p53/TP53-dependent transcription regulatory function. Positively regulates p53/TP53 and p73/TP73 and stimulates their capacity to induce apoptosis and regulate cell cycle. In response to double-strand DNA breaks, promotes p53/TP53 phosphorylation on 'Ser-46' and subsequent apoptosis. Acts as a tumor suppressor by inducing cell death by an autophagy and caspase-dependent mechanism. Can reduce cell migration by regulating the expression of SPARC. This Rattus norvegicus (Rat) protein is Tumor protein p53-inducible nuclear protein 1 (Trp53inp1).